Consider the following 483-residue polypeptide: Regulatory protein ViaA (483 aa).

It belongs to the ViaA family. In terms of assembly, homodimer. Interacts with RavA.

It is found in the cytoplasm. Its function is as follows. Component of the RavA-ViaA chaperone complex, which may act on the membrane to optimize the function of some of the respiratory chains. ViaA stimulates the ATPase activity of RavA. The protein is Regulatory protein ViaA of Salmonella heidelberg (strain SL476).